We begin with the raw amino-acid sequence, 187 residues long: Small ribosomal subunit protein uS5 (187 aa).

Residues Phe-20–Val-83 enclose the S5 DRBM domain. A disordered region spans residues Lys-155 to Ala-187. Basic and acidic residues predominate over residues Lys-170 to Ala-181.

It belongs to the universal ribosomal protein uS5 family. Part of the 30S ribosomal subunit. Contacts proteins S4 and S8.

In terms of biological role, with S4 and S12 plays an important role in translational accuracy. Functionally, located at the back of the 30S subunit body where it stabilizes the conformation of the head with respect to the body. This is Small ribosomal subunit protein uS5 from Ruegeria sp. (strain TM1040) (Silicibacter sp.).